An 82-amino-acid polypeptide reads, in one-letter code: uncharacterized protein (82 aa).

This is an uncharacterized protein from Treponema pallidum (strain Nichols).